Reading from the N-terminus, the 383-residue chain is Succinyl-diaminopimelate desuccinylase (383 aa).

A Zn(2+)-binding site is contributed by His74. The active site involves Asp76. Asp107 contributes to the Zn(2+) binding site. The active-site Proton acceptor is Glu141. Zn(2+)-binding residues include Glu142, Glu170, and His356.

This sequence belongs to the peptidase M20A family. DapE subfamily. As to quaternary structure, homodimer. The cofactor is Zn(2+). Co(2+) is required as a cofactor.

It carries out the reaction N-succinyl-(2S,6S)-2,6-diaminopimelate + H2O = (2S,6S)-2,6-diaminopimelate + succinate. Its pathway is amino-acid biosynthesis; L-lysine biosynthesis via DAP pathway; LL-2,6-diaminopimelate from (S)-tetrahydrodipicolinate (succinylase route): step 3/3. In terms of biological role, catalyzes the hydrolysis of N-succinyl-L,L-diaminopimelic acid (SDAP), forming succinate and LL-2,6-diaminopimelate (DAP), an intermediate involved in the bacterial biosynthesis of lysine and meso-diaminopimelic acid, an essential component of bacterial cell walls. This is Succinyl-diaminopimelate desuccinylase from Polynucleobacter necessarius subsp. necessarius (strain STIR1).